A 235-amino-acid chain; its full sequence is Small ribosomal subunit protein uS3 (235 aa).

A KH type-2 domain is found at 39 to 107 (VRKFLNKELM…PAQINIAEVK (69 aa)).

The protein belongs to the universal ribosomal protein uS3 family. Part of the 30S ribosomal subunit. Forms a tight complex with proteins S10 and S14.

Its function is as follows. Binds the lower part of the 30S subunit head. Binds mRNA in the 70S ribosome, positioning it for translation. The protein is Small ribosomal subunit protein uS3 of Actinobacillus succinogenes (strain ATCC 55618 / DSM 22257 / CCUG 43843 / 130Z).